The chain runs to 403 residues: Homoserine O-succinyltransferase (403 aa).

Residues 58–366 (NAVLICHALS…ESNHGHDAFL (309 aa)) form the AB hydrolase-1 domain. Ser164 serves as the catalytic Nucleophile. Arg234 is a substrate binding site. Active-site residues include Asp329 and His362. Residue Asp363 participates in substrate binding.

The protein belongs to the AB hydrolase superfamily. MetX family. Homodimer.

The protein localises to the cytoplasm. The enzyme catalyses L-homoserine + succinyl-CoA = O-succinyl-L-homoserine + CoA. It participates in amino-acid biosynthesis; L-methionine biosynthesis via de novo pathway; O-succinyl-L-homoserine from L-homoserine: step 1/1. Functionally, transfers a succinyl group from succinyl-CoA to L-homoserine, forming succinyl-L-homoserine. The chain is Homoserine O-succinyltransferase from Halothiobacillus neapolitanus (strain ATCC 23641 / c2) (Thiobacillus neapolitanus).